Reading from the N-terminus, the 1438-residue chain is DNA polymerase III PolC-type (1438 aa).

The Exonuclease domain occupies 422-578 (YVVFDVETTG…YDTEATAYIF (157 aa)).

The protein belongs to the DNA polymerase type-C family. PolC subfamily.

The protein resides in the cytoplasm. It carries out the reaction DNA(n) + a 2'-deoxyribonucleoside 5'-triphosphate = DNA(n+1) + diphosphate. Functionally, required for replicative DNA synthesis. This DNA polymerase also exhibits 3' to 5' exonuclease activity. This Staphylococcus aureus (strain bovine RF122 / ET3-1) protein is DNA polymerase III PolC-type.